The chain runs to 715 residues: Polyribonucleotide nucleotidyltransferase (715 aa).

Mg(2+) contacts are provided by Asp497 and Asp503. The KH domain occupies 564–623 (PRLLTMKIDPEQIGLVIGPGGKTIKSITEQTGSKIDIADDGTVTIAAIQAKKAERARDLI). One can recognise an S1 motif domain in the interval 633–701 (GEVYLGRVTR…NKGRLNLTRL (69 aa)).

This sequence belongs to the polyribonucleotide nucleotidyltransferase family. Requires Mg(2+) as cofactor.

The protein localises to the cytoplasm. The catalysed reaction is RNA(n+1) + phosphate = RNA(n) + a ribonucleoside 5'-diphosphate. In terms of biological role, involved in mRNA degradation. Catalyzes the phosphorolysis of single-stranded polyribonucleotides processively in the 3'- to 5'-direction. The chain is Polyribonucleotide nucleotidyltransferase from Crocosphaera subtropica (strain ATCC 51142 / BH68) (Cyanothece sp. (strain ATCC 51142)).